The primary structure comprises 475 residues: Putative F-box protein At3g58960 (475 aa).

The region spanning 1–49 (MDRISSLSNDIISNIVSFLSAKDAAVASVLSKRWQNIYTIVPNLEFDNT) is the F-box domain.

This Arabidopsis thaliana (Mouse-ear cress) protein is Putative F-box protein At3g58960.